A 153-amino-acid polypeptide reads, in one-letter code: NADPH-dependent 7-cyano-7-deazaguanine reductase (153 aa).

Residue Cys-51 is the Thioimide intermediate of the active site. Residue Asp-58 is the Proton donor of the active site. Residues 73–75 (LES) and 92–93 (HE) contribute to the substrate site.

The protein belongs to the GTP cyclohydrolase I family. QueF type 1 subfamily.

It localises to the cytoplasm. The catalysed reaction is 7-aminomethyl-7-carbaguanine + 2 NADP(+) = 7-cyano-7-deazaguanine + 2 NADPH + 3 H(+). It functions in the pathway tRNA modification; tRNA-queuosine biosynthesis. Catalyzes the NADPH-dependent reduction of 7-cyano-7-deazaguanine (preQ0) to 7-aminomethyl-7-deazaguanine (preQ1). In Bradyrhizobium diazoefficiens (strain JCM 10833 / BCRC 13528 / IAM 13628 / NBRC 14792 / USDA 110), this protein is NADPH-dependent 7-cyano-7-deazaguanine reductase.